Consider the following 205-residue polypeptide: Meiotic nuclear division protein 1 homolog (205 aa).

N-acetylserine is present on serine 2. Positions 83–173 (KRKLEALNSQ…EAANRWTDNI (91 aa)) form a coiled coil.

This sequence belongs to the MND1 family. Heterodimer with PSMC3IP/HOP2. MND1-PSMC3IP interacts with DMC1 and RAD51 and binds to ssDNA and dsDNA showing no preference for either form of DNA.

The protein localises to the nucleus. Functionally, required for proper homologous chromosome pairing and efficient cross-over and intragenic recombination during meiosis. Stimulates both DMC1- and RAD51-mediated homologous strand assimilation, which is required for the resolution of meiotic double-strand breaks. This is Meiotic nuclear division protein 1 homolog from Mus musculus (Mouse).